A 218-amino-acid chain; its full sequence is Pyridoxine/pyridoxamine 5'-phosphate oxidase (218 aa).

Substrate contacts are provided by residues 12–15 and Arg-70; that span reads RLSY. FMN contacts are provided by residues 65-70, 80-81, Lys-87, and Gln-109; these read RTVLLR and YT. Residues Tyr-127, Arg-131, and Ser-135 each coordinate substrate. Residues 145–146 and Trp-191 contribute to the FMN site; that span reads QS. 197 to 199 contributes to the substrate binding site; it reads RLH. FMN is bound at residue Arg-201.

Belongs to the pyridoxamine 5'-phosphate oxidase family. As to quaternary structure, homodimer. Requires FMN as cofactor.

It carries out the reaction pyridoxamine 5'-phosphate + O2 + H2O = pyridoxal 5'-phosphate + H2O2 + NH4(+). The enzyme catalyses pyridoxine 5'-phosphate + O2 = pyridoxal 5'-phosphate + H2O2. It functions in the pathway cofactor metabolism; pyridoxal 5'-phosphate salvage; pyridoxal 5'-phosphate from pyridoxamine 5'-phosphate: step 1/1. Its pathway is cofactor metabolism; pyridoxal 5'-phosphate salvage; pyridoxal 5'-phosphate from pyridoxine 5'-phosphate: step 1/1. Its function is as follows. Catalyzes the oxidation of either pyridoxine 5'-phosphate (PNP) or pyridoxamine 5'-phosphate (PMP) into pyridoxal 5'-phosphate (PLP). This is Pyridoxine/pyridoxamine 5'-phosphate oxidase from Acinetobacter baumannii (strain AB0057).